Here is a 274-residue protein sequence, read N- to C-terminus: Non-heme haloperoxidase (274 aa).

The AB hydrolase-1 domain occupies 22 to 254; the sequence is PIMFHHGWPL…RLKVYPGLSH (233 aa). Active-site residues include Ser95, Asp225, and His254.

The protein belongs to the AB hydrolase superfamily. Bacterial non-heme haloperoxidase / perhydrolase family.

This is Non-heme haloperoxidase (thcF) from Rhodococcus erythropolis (Arthrobacter picolinophilus).